The chain runs to 132 residues: Sec-independent protein translocase protein TatB (132 aa).

The helical transmembrane segment at 2–22 (FDGIGFMELLLIGILGLVVLG) threads the bilayer. Residues 86-132 (LKSAAQSVNRPYKVEDISPASSSAPVDPAPTETKTAETSANSEKPNG) are disordered. The segment covering 103–115 (SPASSSAPVDPAP) has biased composition (low complexity). The span at 117 to 132 (ETKTAETSANSEKPNG) shows a compositional bias: polar residues.

This sequence belongs to the TatB family. As to quaternary structure, the Tat system comprises two distinct complexes: a TatABC complex, containing multiple copies of TatA, TatB and TatC subunits, and a separate TatA complex, containing only TatA subunits. Substrates initially bind to the TatABC complex, which probably triggers association of the separate TatA complex to form the active translocon.

It is found in the cell inner membrane. Part of the twin-arginine translocation (Tat) system that transports large folded proteins containing a characteristic twin-arginine motif in their signal peptide across membranes. Together with TatC, TatB is part of a receptor directly interacting with Tat signal peptides. TatB may form an oligomeric binding site that transiently accommodates folded Tat precursor proteins before their translocation. This is Sec-independent protein translocase protein TatB from Shewanella sediminis (strain HAW-EB3).